Reading from the N-terminus, the 86-residue chain is MATSHSLGEKILVKLIRFYQLAISPMIGPRCRFTPTCSCYGIEAIKTHGALKGSWLTLKRILKCHPLSKGGYDPVPPKINNNVEKK.

It belongs to the UPF0161 family.

The protein localises to the cell inner membrane. Its function is as follows. Could be involved in insertion of integral membrane proteins into the membrane. The protein is Putative membrane protein insertion efficiency factor of Mannheimia succiniciproducens (strain KCTC 0769BP / MBEL55E).